A 220-amino-acid polypeptide reads, in one-letter code: Peptide methionine sulfoxide reductase MsrA (220 aa).

Cys59 is an active-site residue.

Belongs to the MsrA Met sulfoxide reductase family.

It catalyses the reaction L-methionyl-[protein] + [thioredoxin]-disulfide + H2O = L-methionyl-(S)-S-oxide-[protein] + [thioredoxin]-dithiol. The enzyme catalyses [thioredoxin]-disulfide + L-methionine + H2O = L-methionine (S)-S-oxide + [thioredoxin]-dithiol. Has an important function as a repair enzyme for proteins that have been inactivated by oxidation. Catalyzes the reversible oxidation-reduction of methionine sulfoxide in proteins to methionine. The chain is Peptide methionine sulfoxide reductase MsrA from Corynebacterium kroppenstedtii (strain DSM 44385 / JCM 11950 / CIP 105744 / CCUG 35717).